The primary structure comprises 116 residues: MSGIRPVDGRANLTSAQNLLSTGEAEERINWVSKALCRATDPDELFVRGAAQRKAAVICRHCPVMQECGADALDNKVEFGVWGGMTERQRRALLKQHPEVVSWSDYFEKRKRRSVG.

One can recognise a 4Fe-4S Wbl-type domain in the interval 36–92; sequence LCRATDPDELFVRGAAQRKAAVICRHCPVMQECGADALDNKVEFGVWGGMTERQRRA. Residues cysteine 37, cysteine 59, cysteine 62, and cysteine 68 each coordinate [4Fe-4S] cluster.

This sequence belongs to the WhiB family. Requires [4Fe-4S] cluster as cofactor. Post-translationally, the Fe-S cluster can be nitrosylated by nitric oxide (NO). In terms of processing, upon Fe-S cluster removal intramolecular disulfide bonds are formed.

It is found in the cytoplasm. Its function is as follows. Acts as a transcriptional regulator. Probably redox-responsive. The apo- but not holo-form probably binds DNA. Plays a role in lipooligosaccharide (LOS) biosynthesis by regulating LOS gene expression. This chain is Transcriptional regulator WhiB4 (whiB4), found in Mycobacterium marinum (strain ATCC BAA-535 / M).